Reading from the N-terminus, the 272-residue chain is Flagellin (272 aa).

This sequence belongs to the bacterial flagellin family.

The protein resides in the secreted. Its subcellular location is the bacterial flagellum. In terms of biological role, flagellin is the subunit protein which polymerizes to form the filaments of bacterial flagella. In Halalkalibacterium halodurans (strain ATCC BAA-125 / DSM 18197 / FERM 7344 / JCM 9153 / C-125) (Bacillus halodurans), this protein is Flagellin (hag).